A 484-amino-acid chain; its full sequence is Mitogen-activated protein kinase SLT2/MPK1 (484 aa).

A Protein kinase domain is found at 23–318; sequence FQLIKEIGHG…VDEALEHPYL (296 aa). Residues 29–37 and Lys54 contribute to the ATP site; that span reads IGHGAYGIV. Catalysis depends on Asp153, which acts as the Proton acceptor. Residue Thr190 is modified to Phosphothreonine. A TXY motif is present at residues 190-192; sequence TEY. Residue Tyr192 is modified to Phosphotyrosine. Over residues 383-392 the composition is skewed to low complexity; sequence QQQQQQQQQP. Disordered stretches follow at residues 383–403 and 426–464; these read QQQQ…AAAS and IHSQ…PQND.

Belongs to the protein kinase superfamily. CMGC Ser/Thr protein kinase family. MAP kinase subfamily. As to quaternary structure, interacts with RLM1. Mg(2+) serves as cofactor. Post-translationally, dually phosphorylated on Thr-190 and Tyr-192, which activates the enzyme.

The enzyme catalyses L-seryl-[protein] + ATP = O-phospho-L-seryl-[protein] + ADP + H(+). The catalysed reaction is L-threonyl-[protein] + ATP = O-phospho-L-threonyl-[protein] + ADP + H(+). Its activity is regulated as follows. Activated by tyrosine and threonine phosphorylation by MKK1 and MKK2. Serine/threonine protein kinase involved in a signal transduction pathway that plays a role in yeast cell morphogenesis and cell growth. This pathway seems to start by SMP3; then involve the kinase PKC1 that may act the BCK1 kinase that then phosphorylates MKK1 and MKK2 which themselves phosphorylate the SLT2/MPK1 kinase which itself then phosphorylates and activates the transcription factor RLM1. Directly phosphorylates BCY1 upon TOR complex 1 (TORC1) inhibition. This Saccharomyces cerevisiae (strain ATCC 204508 / S288c) (Baker's yeast) protein is Mitogen-activated protein kinase SLT2/MPK1 (SLT2).